The following is a 173-amino-acid chain: Putative phosphoesterase GWCH70_0799 (173 aa).

The Proton donor role is filled by H34. Short sequence motifs (HXTX) lie at residues 34–37 (HLTL) and 115–118 (HITI). H115 functions as the Proton acceptor in the catalytic mechanism.

Belongs to the 2H phosphoesterase superfamily. YjcG family.

In Geobacillus sp. (strain WCH70), this protein is Putative phosphoesterase GWCH70_0799.